The following is a 100-amino-acid chain: MRALTLLALLALAALCIAGQAGAKPSGAESSKGAAFVSKQEGSEVVKRPRRYLYQWLGAPVPYPDPLEPRREVCELNPDCDELADHIGFQEAYRRFYGPV.

A signal peptide spans methionine 1 to alanine 23. The propeptide occupies lysine 24–arginine 51. Residues tyrosine 52–glycine 98 enclose the Gla domain. The Ca(2+) site is built by glutamate 68, glutamate 72, glutamate 75, and aspartate 81. Residue glutamate 68 is modified to 4-carboxyglutamate; partial. 4-carboxyglutamate occurs at positions 72 and 75. A disulfide bridge connects residues cysteine 74 and cysteine 80.

The protein belongs to the osteocalcin/matrix Gla protein family. In terms of processing, gamma-carboxyglutamate residues are formed by vitamin K dependent carboxylation by GGCX. These residues are essential for the binding of calcium. Decarboxylation promotes the hormone activity.

It is found in the secreted. Functionally, bone protein that constitutes 1-2% of the total bone protein, and which acts as a negative regulator of bone formation. Functions to limit bone formation without impairing bone resorption or mineralization. It binds strongly to apatite and calcium. Its function is as follows. The uncarboxylated form acts as a hormone secreted by osteoblasts, which regulates different cellular processes, such as energy metabolism, male fertility and brain development. Regulates of energy metabolism by acting as a hormone favoring pancreatic beta-cell proliferation, insulin secretion and sensitivity and energy expenditure. Uncarboxylated osteocalcin hormone also promotes testosterone production in the testes: acts as a ligand for G protein-coupled receptor GPRC6A at the surface of Leydig cells, initiating a signaling response that promotes the expression of enzymes required for testosterone synthesis in a CREB-dependent manner. Also acts as a regulator of brain development: osteocalcin hormone crosses the blood-brain barrier and acts as a ligand for GPR158 on neurons, initiating a signaling response that prevents neuronal apoptosis in the hippocampus, favors the synthesis of all monoamine neurotransmitters and inhibits that of gamma-aminobutyric acid (GABA). Osteocalcin also crosses the placenta during pregnancy and maternal osteocalcin is required for fetal brain development. The chain is Osteocalcin (BGLAP) from Homo sapiens (Human).